The primary structure comprises 859 residues: Protein translocase subunit SecA (859 aa).

ATP is bound by residues Q88, 106-110, and D496; that span reads GEGKT. The interval 818 to 838 is disordered; it reads FSHQPQSEVKVSRNDPCPCGS. Zn(2+)-binding residues include C834, C836, C845, and C846.

It belongs to the SecA family. In terms of assembly, monomer and homodimer. Part of the essential Sec protein translocation apparatus which comprises SecA, SecYEG and auxiliary proteins SecDF-YajC and YidC. It depends on Zn(2+) as a cofactor.

The protein resides in the cell inner membrane. It is found in the cytoplasm. The catalysed reaction is ATP + H2O + cellular proteinSide 1 = ADP + phosphate + cellular proteinSide 2.. In terms of biological role, part of the Sec protein translocase complex. Interacts with the SecYEG preprotein conducting channel. Has a central role in coupling the hydrolysis of ATP to the transfer of proteins into and across the cell membrane, serving as an ATP-driven molecular motor driving the stepwise translocation of polypeptide chains across the membrane. The polypeptide is Protein translocase subunit SecA (Wolinella succinogenes (strain ATCC 29543 / DSM 1740 / CCUG 13145 / JCM 31913 / LMG 7466 / NCTC 11488 / FDC 602W) (Vibrio succinogenes)).